The sequence spans 196 residues: Beta-crystallin A4 (196 aa).

Residue threonine 2 is modified to N-acetylthreonine. The tract at residues 2–11 (TLQCTKSAGP) is N-terminal arm. 2 Beta/gamma crystallin 'Greek key' domains span residues 12–51 (WKMV…KVLS) and 52–98 (GAWV…RPAA). Positions 99–104 (CANHRD) are connecting peptide. Beta/gamma crystallin 'Greek key' domains lie at 105 to 146 (SRLT…HVHS) and 147 to 195 (GAWV…RRIQ).

This sequence belongs to the beta/gamma-crystallin family. Homo/heterodimer, or complexes of higher-order. The structure of beta-crystallin oligomers seems to be stabilized through interactions between the N-terminal arms.

In terms of biological role, crystallins are the dominant structural components of the vertebrate eye lens. This is Beta-crystallin A4 (CRYBA4) from Homo sapiens (Human).